The following is a 148-amino-acid chain: Large ribosomal subunit protein bL9 (148 aa).

Belongs to the bacterial ribosomal protein bL9 family.

Binds to the 23S rRNA. The polypeptide is Large ribosomal subunit protein bL9 (Solibacter usitatus (strain Ellin6076)).